Here is a 193-residue protein sequence, read N- to C-terminus: 3-isopropylmalate dehydratase small subunit (193 aa).

This sequence belongs to the LeuD family. LeuD type 1 subfamily. As to quaternary structure, heterodimer of LeuC and LeuD.

The catalysed reaction is (2R,3S)-3-isopropylmalate = (2S)-2-isopropylmalate. It participates in amino-acid biosynthesis; L-leucine biosynthesis; L-leucine from 3-methyl-2-oxobutanoate: step 2/4. Functionally, catalyzes the isomerization between 2-isopropylmalate and 3-isopropylmalate, via the formation of 2-isopropylmaleate. The chain is 3-isopropylmalate dehydratase small subunit from Bacillus cereus (strain ATCC 10987 / NRS 248).